The sequence spans 906 residues: Nuclear factor NF-kappa-B p100 subunit (906 aa).

The region spanning 34–223 (AVGPYLVIIE…DPIHDSKSPG (190 aa)) is the RHD domain. A Nuclear localization signal motif is present at residues 336–340 (RNRKK). Residues 345–374 (FPQHFGGGSHMGGAGGAGGFGAGGGGNLSF) form a GRR region. ANK repeat units follow at residues 472–501 (NGDTPLHLAIIHEQTAVIKQLIEVVVSIPS), 511–540 (LQQTPLHLAVITKQPQVVQLLLEAHANPTL), 544–573 (YGNSLLHLALQAADEEMLRMLLAHLASATP), 582–611 (QGLLPVHLAVKAKSPACLDLLVRKGADVNG), 616–646 (GGRTPLHLAVEMENLNMATHLVKKLGANVNS), and 650–679 (AGNTPLHLAAGLGSPTLTKLLLKAGADVQR). 2 disordered regions span residues 677–734 (VQRE…GPRQ) and 857–906 (EPLE…QQVH). Positions 684 to 695 (PVSPSSVRVPSS) are enriched in low complexity. Residues 697–708 (TDGDPEEQEQEQ) are compositionally biased toward acidic residues. The 87-residue stretch at 771 to 857 (RNHLLSLDTD…GAVRMLRKPE (87 aa)) folds into the Death domain.

As to quaternary structure, component of the NF-kappa-B RelB-p52 complex. While translation occurs, the particular unfolded structure after the GRR repeat promotes the generation of p52 making it an acceptable substrate for the proteasome. This process is known as cotranslational processing. The processed form is active and the unprocessed form acts as an inhibitor (I kappa B-like), being able to form cytosolic complexes with NF-kappa B, trapping it in the cytoplasm. Complete folding of the region downstream of the GRR repeat precludes processing. Post-translationally, constitutive processing is tightly suppressed by its C-terminal processing inhibitory domain, named PID, which contains the death domain.

The protein resides in the nucleus. It localises to the cytoplasm. NF-kappa-B is a pleiotropic transcription factor present in almost all cell types and is the endpoint of a series of signal transduction events that are initiated by a vast array of stimuli related to many biological processes such as inflammation, immunity, differentiation, cell growth, tumorigenesis and apoptosis. NF-kappa-B is a homo- or heterodimeric complex formed by the Rel-like domain-containing proteins RELA/p65, RELB, NFKB1/p105, NFKB1/p50, REL and NFKB2/p52. The dimers bind at kappa-B sites in the DNA of their target genes and the individual dimers have distinct preferences for different kappa-B sites that they can bind with distinguishable affinity and specificity. Different dimer combinations act as transcriptional activators or repressors, respectively. NF-kappa-B is controlled by various mechanisms of post-translational modification and subcellular compartmentalization as well as by interactions with other cofactors or corepressors. NF-kappa-B complexes are held in the cytoplasm in an inactive state complexed with members of the NF-kappa-B inhibitor (I-kappa-B) family. In a conventional activation pathway, I-kappa-B is phosphorylated by I-kappa-B kinases (IKKs) in response to different activators, subsequently degraded thus liberating the active NF-kappa-B complex which translocates to the nucleus. In a non-canonical activation pathway, the MAP3K14-activated CHUK/IKKA homodimer phosphorylates NFKB2/p100 associated with RelB, inducing its proteolytic processing to NFKB2/p52 and the formation of NF-kappa-B RelB-p52 complexes. The NF-kappa-B heterodimeric RelB-p52 complex is a transcriptional activator. NFKB2 appears to have dual functions such as cytoplasmic retention of attached NF-kappa-B proteins by p100 and generation of p52 by a cotranslational processing. The proteasome-mediated process ensures the production of both p52 and p100 and preserves their independent function. p52 binds to the kappa-B consensus sequence 5'-GGRNNYYCC-3', located in the enhancer region of genes involved in immune response and acute phase reactions. In concert with RELB, may play a role in the regulation of the circadian clock. The protein is Nuclear factor NF-kappa-B p100 subunit (NFKB2) of Gallus gallus (Chicken).